Here is a 151-residue protein sequence, read N- to C-terminus: Peptide methionine sulfoxide reductase MsrB (151 aa).

Positions 5–127 (KEERLKQLTR…NSAALRFVPK (123 aa)) constitute a MsrB domain. The active-site Nucleophile is Cys-116.

Belongs to the MsrB Met sulfoxide reductase family.

The enzyme catalyses L-methionyl-[protein] + [thioredoxin]-disulfide + H2O = L-methionyl-(R)-S-oxide-[protein] + [thioredoxin]-dithiol. The chain is Peptide methionine sulfoxide reductase MsrB from Bacillus licheniformis (strain ATCC 14580 / DSM 13 / JCM 2505 / CCUG 7422 / NBRC 12200 / NCIMB 9375 / NCTC 10341 / NRRL NRS-1264 / Gibson 46).